We begin with the raw amino-acid sequence, 43 residues long: Delta/kappa-actitoxin-Avd4a (43 aa).

Intrachain disulfides connect Cys-4/Cys-39, Cys-6/Cys-32, and Cys-22/Cys-40.

This sequence belongs to the sea anemone type 3 (BDS) potassium channel toxin family.

The protein resides in the secreted. It is found in the nematocyst. Its function is as follows. Acts as a gating modifier on both Kv and Nav ion channels, and also acts on blood pressure. Voltage-dependently inhibits voltage-gated potassium channels Kv3 (Kv3.1/KCNC1, Kv3.2/KCNC2 and Kv3.4/KCNC4) and slows inactivation of the voltage-gated sodium channel Nav1.7/SCN9A. Inhibits all Kv3.1, Kv3.2 and Kv3.4 by about 50% when tested at a voltage of +40 mV (45%, 48% and 56%, respectively). May act by binding residues in voltage-sensing domains S3b and S4 of Kv3. On sodium channel, tests have been done on human Nav1.7/SCN9A (expressed in HEK293 cells) (EC(50)=3 nM) and rat SCG neurons that mostly carry Nav1.7 channels (EC(50)=300 nM). This toxin also reduces blood pressure. The polypeptide is Delta/kappa-actitoxin-Avd4a (Anemonia sulcata (Mediterranean snakelocks sea anemone)).